Reading from the N-terminus, the 179-residue chain is Putative cleavage and polyadenylation specificity factor subunit 4-like protein (179 aa).

5 consecutive C3H1-type zinc fingers follow at residues 35 to 61, 62 to 89, 90 to 117, 118 to 145, and 146 to 169; these read KSAS…RHDR, GEKM…HQYD, LTRM…HVKP, AFKS…HVPR, and IMCL…QKIR.

It belongs to the CPSF4/YTH1 family.

The sequence is that of Putative cleavage and polyadenylation specificity factor subunit 4-like protein (CPSF4L) from Homo sapiens (Human).